Here is a 501-residue protein sequence, read N- to C-terminus: Pentatricopeptide repeat-containing protein At4g14190, chloroplastic (501 aa).

The transit peptide at 1-88 (MENLTTAQFL…SGSCPLRLLQ (88 aa)) directs the protein to the chloroplast. PPR repeat units lie at residues 130–160 (SENN…MIDD), 166–200 (SLEI…GLLP), 201–235 (ITET…GCVR), 236–270 (DHVT…KMTL), and 271–305 (EPST…GISL).

This sequence belongs to the PPR family. P subfamily.

The protein localises to the plastid. Its subcellular location is the chloroplast. This is Pentatricopeptide repeat-containing protein At4g14190, chloroplastic from Arabidopsis thaliana (Mouse-ear cress).